We begin with the raw amino-acid sequence, 300 residues long: Protein Bel-1 (300 aa).

The disordered stretch occupies residues 1–50 (MDSYEKEESVASTSGIQDLQTLSELVGPENAGEGELTIAEEPEENPRRPR). The segment covering 10-23 (VASTSGIQDLQTLS) has biased composition (polar residues). A DNA-binding region spans residues 89-200 (SKSLCKRLIL…SEGPKPRPRH (112 aa)). Residues 209–244 (FEKHHKPRQKRPRRRSIDNESCASSSDTMANEPGSL) are disordered. Basic residues predominate over residues 211–222 (KHHKPRQKRPRR). A Nuclear localization signal motif is present at residues 214–223 (KPRQKRPRRR). The tract at residues 224-300 (SIDNESCASS…PSGSGEHSVL (77 aa)) is transactivation domain. Over residues 227 to 237 (NESCASSSDTM) the composition is skewed to polar residues.

As to quaternary structure, homodimer or homomultimer. Forms complexes with the host nuclear factors NFIA, NFIB, NFIC or NFIX.

The protein localises to the host nucleus. Its function is as follows. Transcriptional transactivator that activates the viral internal promoter (IP), thereby enhancing its own expression. This transactivation is repressed by nuclear factor I. Also transactivates the long terminal repeat (LTR) promoter, thereby inducing structural gene expression, initiating the late phase of infection. It is therefore a key regulator of viral gene expression. It directly binds to and activates DNA target sites of viral promoters and those of distinct cellular genes. Required for viral replication. The polypeptide is Protein Bel-1 (bel1) (Human spumaretrovirus (SFVcpz(hu))).